A 374-amino-acid chain; its full sequence is Putative zinc metalloprotease R01501 (374 aa).

His26 contributes to the Zn(2+) binding site. Glu27 is an active-site residue. A Zn(2+)-binding site is contributed by His30. 4 helical membrane passes run 36-55 (WSGI…LFGW), 112-134 (AATV…AVLF), 301-323 (VLNF…VPVL), and 348-367 (LAFR…AAWN). The PDZ domain occupies 126 to 199 (AIAIFAVLFS…LPITVRIERE (74 aa)).

This sequence belongs to the peptidase M50B family. Requires Zn(2+) as cofactor.

The protein resides in the cell inner membrane. The chain is Putative zinc metalloprotease R01501 from Rhizobium meliloti (strain 1021) (Ensifer meliloti).